Here is a 209-residue protein sequence, read N- to C-terminus: Redox-sensing transcriptional repressor Rex (209 aa).

The H-T-H motif DNA-binding region spans 16 to 55 (LYYRFIQNLSLSGKQRVSSAELSEAVKVDSATIRRDFSYF). An NAD(+)-binding site is contributed by 90–95 (GVGNLG).

The protein belongs to the transcriptional regulatory Rex family. As to quaternary structure, homodimer.

The protein localises to the cytoplasm. Modulates transcription in response to changes in cellular NADH/NAD(+) redox state. The chain is Redox-sensing transcriptional repressor Rex from Bacillus cereus (strain G9842).